The following is a 424-amino-acid chain: Serine--tRNA ligase (424 aa).

231 to 233 contributes to the L-serine binding site; that stretch reads TAE. 261–263 contacts ATP; sequence RSE. Position 284 (Glu-284) interacts with L-serine. 348-351 contacts ATP; sequence ETSS. Ser-383 contacts L-serine.

The protein belongs to the class-II aminoacyl-tRNA synthetase family. Type-1 seryl-tRNA synthetase subfamily. In terms of assembly, homodimer. The tRNA molecule binds across the dimer.

The protein localises to the cytoplasm. The catalysed reaction is tRNA(Ser) + L-serine + ATP = L-seryl-tRNA(Ser) + AMP + diphosphate + H(+). It catalyses the reaction tRNA(Sec) + L-serine + ATP = L-seryl-tRNA(Sec) + AMP + diphosphate + H(+). It participates in aminoacyl-tRNA biosynthesis; selenocysteinyl-tRNA(Sec) biosynthesis; L-seryl-tRNA(Sec) from L-serine and tRNA(Sec): step 1/1. In terms of biological role, catalyzes the attachment of serine to tRNA(Ser). Is also able to aminoacylate tRNA(Sec) with serine, to form the misacylated tRNA L-seryl-tRNA(Sec), which will be further converted into selenocysteinyl-tRNA(Sec). This Metamycoplasma arthritidis (strain 158L3-1) (Mycoplasma arthritidis) protein is Serine--tRNA ligase.